Consider the following 241-residue polypeptide: Large ribosomal subunit protein uL2 (241 aa).

Over residues M1–R12 the composition is skewed to basic residues. Disordered stretches follow at residues M1–S21 and A200–R241.

It belongs to the universal ribosomal protein uL2 family. In terms of assembly, part of the 50S ribosomal subunit. Forms a bridge to the 30S subunit in the 70S ribosome.

Functionally, one of the primary rRNA binding proteins. Required for association of the 30S and 50S subunits to form the 70S ribosome, for tRNA binding and peptide bond formation. It has been suggested to have peptidyltransferase activity; this is somewhat controversial. Makes several contacts with the 16S rRNA in the 70S ribosome. The polypeptide is Large ribosomal subunit protein uL2 (Methanothermobacter thermautotrophicus (strain ATCC 29096 / DSM 1053 / JCM 10044 / NBRC 100330 / Delta H) (Methanobacterium thermoautotrophicum)).